Reading from the N-terminus, the 430-residue chain is Enolase (430 aa).

Q167 contacts (2R)-2-phosphoglycerate. E209 functions as the Proton donor in the catalytic mechanism. The Mg(2+) site is built by D246, E289, and D316. (2R)-2-phosphoglycerate-binding residues include K341, R370, S371, and K392. K341 acts as the Proton acceptor in catalysis.

The protein belongs to the enolase family. As to quaternary structure, component of the RNA degradosome, a multiprotein complex involved in RNA processing and mRNA degradation. Mg(2+) is required as a cofactor.

The protein resides in the cytoplasm. The protein localises to the secreted. It is found in the cell surface. The catalysed reaction is (2R)-2-phosphoglycerate = phosphoenolpyruvate + H2O. The protein operates within carbohydrate degradation; glycolysis; pyruvate from D-glyceraldehyde 3-phosphate: step 4/5. In terms of biological role, catalyzes the reversible conversion of 2-phosphoglycerate (2-PG) into phosphoenolpyruvate (PEP). It is essential for the degradation of carbohydrates via glycolysis. The polypeptide is Enolase (Idiomarina loihiensis (strain ATCC BAA-735 / DSM 15497 / L2-TR)).